Here is a 56-residue protein sequence, read N- to C-terminus: MEVSARVRVLMQHALHTIERRYKQVLLLIQQLSQHGIQSYSISPFHIHCIYSCYSL.

The protein operates within polyketide biosynthesis. Part of the gene cluster B that mediates the biosynthesis of botcinic acid and its botcinin derivatives, acetate-derived polyketides that contribute to virulence when combined with the sesquiterpene botrydial. Botcinic acid and its derivatives have been shown to induce chlorosis and necrosis during host plant infection, but also have antifungal activities. Two polyketide synthases, BOA6 and BOA9, are involved in the biosynthesis of botcinins. BOA6 mediates the formation of the per-methylated tetraketide core by condensation of four units of malonyl-CoA with one unit of acetyl-CoA, which would be methylated in activated methylene groups to yield a bicyclic acid intermediate that could then either be converted to botrylactone derivatives or lose the starter acetate unit through a retro-Claisen type C-C bond cleavage to yield botcinin derivatives. The second polyketide synthase, BOA9, is probably required for the biosynthesis of the tetraketide side chain of botcinins. The methyltransferase (MT) domain within BOA6 is probably responsible for the incorporation of four methyl groups. The trans-enoyl reductase BOA5 might take over the enoyl reductase function of BOA6 that misses an ER domain. The monooxygenases BOA2, BOA3 and BOA4 might be involved in further hydroxylations at C4, C5 and C8, whereas BOA7, close to BOA9, could potentially be involved in the hydroxylation at C4 in the side chain of botcinins. This is Botcinic acid biosynthesis cluster B protein 14 from Botryotinia fuckeliana (strain B05.10) (Noble rot fungus).